A 77-amino-acid polypeptide reads, in one-letter code: Sec-independent protein translocase protein TatA (77 aa).

The chain crosses the membrane as a helical span at residues 2–22; that stretch reads GFGGISIWQLLIILLIVVMLF. 2 stretches are compositionally biased toward basic and acidic residues: residues 46 to 59 and 66 to 77; these read DNGE…EEPK and QARKVEEPAKKD. A disordered region spans residues 46–77; that stretch reads DNGEAEKPAVEEPKGQTIDAQARKVEEPAKKD.

It belongs to the TatA/E family. In terms of assembly, the Tat system comprises two distinct complexes: a TatABC complex, containing multiple copies of TatA, TatB and TatC subunits, and a separate TatA complex, containing only TatA subunits. Substrates initially bind to the TatABC complex, which probably triggers association of the separate TatA complex to form the active translocon.

The protein localises to the cell inner membrane. Its function is as follows. Part of the twin-arginine translocation (Tat) system that transports large folded proteins containing a characteristic twin-arginine motif in their signal peptide across membranes. TatA could form the protein-conducting channel of the Tat system. This is Sec-independent protein translocase protein TatA from Ectopseudomonas mendocina (strain ymp) (Pseudomonas mendocina).